Reading from the N-terminus, the 207-residue chain is Small ribosomal subunit protein uS4 (207 aa).

A disordered region spans residues 22-54; the sequence is KSARRSISDKSKFESKPGQHGRTSGSRTSDFGL. Positions 27 to 38 are enriched in basic and acidic residues; it reads SISDKSKFESKP. Positions 42-52 are enriched in polar residues; that stretch reads GRTSGSRTSDF. In terms of domain architecture, S4 RNA-binding spans 97–157; sequence SRLDNVVYRM…EKSKKQLRII (61 aa).

It belongs to the universal ribosomal protein uS4 family. In terms of assembly, part of the 30S ribosomal subunit. Contacts protein S5. The interaction surface between S4 and S5 is involved in control of translational fidelity.

In terms of biological role, one of the primary rRNA binding proteins, it binds directly to 16S rRNA where it nucleates assembly of the body of the 30S subunit. Functionally, with S5 and S12 plays an important role in translational accuracy. The polypeptide is Small ribosomal subunit protein uS4 (Leptothrix cholodnii (strain ATCC 51168 / LMG 8142 / SP-6) (Leptothrix discophora (strain SP-6))).